The primary structure comprises 382 residues: Glutaminyl-peptide cyclotransferase-like protein (382 aa).

A helical transmembrane segment spans residues 35 to 55 (LLPLLLALAVGSAFYTIWSGW). C167 and C191 are oxidised to a cystine. Residue D186 coordinates Zn(2+). The Proton acceptor role is filled by E225. Zn(2+) is bound at residue E226. The active-site Proton acceptor is the D269. Zn(2+) is bound at residue H351.

It belongs to the glutaminyl-peptide cyclotransferase family.

Its subcellular location is the golgi apparatus membrane. It catalyses the reaction N-terminal L-glutaminyl-[peptide] = N-terminal 5-oxo-L-prolyl-[peptide] + NH4(+). Its function is as follows. Responsible for the biosynthesis of pyroglutamyl peptides. This Homo sapiens (Human) protein is Glutaminyl-peptide cyclotransferase-like protein (QPCTL).